The chain runs to 238 residues: tRNA1(Val) (adenine(37)-N6)-methyltransferase (238 aa).

Belongs to the methyltransferase superfamily. tRNA (adenine-N(6)-)-methyltransferase family.

The protein resides in the cytoplasm. The enzyme catalyses adenosine(37) in tRNA1(Val) + S-adenosyl-L-methionine = N(6)-methyladenosine(37) in tRNA1(Val) + S-adenosyl-L-homocysteine + H(+). In terms of biological role, specifically methylates the adenine in position 37 of tRNA(1)(Val) (anticodon cmo5UAC). The polypeptide is tRNA1(Val) (adenine(37)-N6)-methyltransferase (Shewanella sp. (strain W3-18-1)).